The sequence spans 308 residues: Homeobox-leucine zipper protein HOX2 (308 aa).

Disordered stretches follow at residues 15 to 36 and 71 to 117; these read QGSL…SSPW and QGRA…RKKL. Residues 74 to 88 are compositionally biased toward low complexity; sequence ASTSPDSAAALSSAS. The segment at residues 112–171 is a DNA-binding region (homeobox); it reads GGRKKLRLSKDQAAVLEECFKTHSTLNPKQKVALANRLGLRPRQVEVWFQNRRARTKLKQ. A leucine-zipper region spans residues 170–214; sequence KQTEVDCEYLKRWCERLADENKRLEKELADLRALKAAPSPASASA.

Belongs to the HD-ZIP homeobox family. Class II subfamily. As to quaternary structure, homodimer. May form a heterodimer with HOX1, HOX3 or HOX7. Expressed in seedlings, roots, leaves, nodes, internodes, flowers and embryo.

It localises to the nucleus. Probable transcription factor that binds to the DNA sequence 5'-CAAT[GC]ATTG-3'. This Oryza sativa subsp. indica (Rice) protein is Homeobox-leucine zipper protein HOX2 (HOX2).